A 312-amino-acid polypeptide reads, in one-letter code: Small ribosomal subunit protein RACK1 (312 aa).

WD repeat units follow at residues 9–42 (GHRGWVTSLACPQQAGSYIKVVSTSRDGTAISWK), 63–93 (GHTGFVSCVSLAHATDYALTASWDRSIRMWD), 105–135 (KHTKDVLAVAFSPDDRLIVSAGRDNVIRVWN), 148–180 (GHEDWVSSICFSPSLEHPIVVSGSWDNTIKVWN), 192–222 (GHSNYVSTVTVSPDGSLCASGGKDGAALLWD), 233–262 (NVESPINQIAFSPNRFWMCVATERSLSVYD), and 279–307 (PSECISIAWSADGNTLYSGHKDNLIRVWS).

The protein belongs to the WD repeat G protein beta family. Ribosomal protein RACK1 subfamily.

This is Small ribosomal subunit protein RACK1 from Leishmania chagasi.